The primary structure comprises 30 residues: Acidic phospholipase A2 homolog cannitoxin gamma chain (30 aa).

As to quaternary structure, heterotrimer of alpha, beta, and gamma chains; non-covalently linked. Glycosylated. As to expression, expressed by the venom gland.

It localises to the secreted. Functionally, heterotrimer: Snake venom phospholipase A2 (PLA2) heterotrimer that acts as a potent presynaptic neurotoxin by blocking synaptic transmission and synaptic vesicle recycling. Enzymatic activity is essential for the neurotoxic effects. May act by binding in a calcium-dependent fashion to neurotonal pentraxin-1 (NPTX1) and neurotonal pentraxin-2 (NPTX2), but not to neuronal pentraxin receptor (NPTXR). Also binds to taipoxin-associated calcium binding protein 49 (RCN2), a protein localized in the lumen of endoplasmic reticulum. Monomer (gamma chain): Snake venom phospholipase A2 homolog that is neither toxic nor enzymatically active. Does not bind calcium. The sequence is that of Acidic phospholipase A2 homolog cannitoxin gamma chain from Oxyuranus scutellatus canni (Papuan taipan).